The following is a 438-amino-acid chain: MQAEDRSQFGSAAEMLSEQTAALGTGWESMNVQLDGAEPQVERGSQEERPWRTVPGPLEHLCCDLEEEPQSLQEKAQSAPWVPAIPQEGNTGDWEMAAALLAAGSQGLVTIKDVSLCFSQEEWRSLDPSQTDFYGEYVMQENCGIVVSLRFPIPKLDMLSQLEGGEEQWVPDPQDLEERDILRVTYTGDGSEHEGDTPELEAEPPRMLSSVSEDTVLWNPEHDESWDSMPSSSRGMLLGPPFLQEDSFSNLLCSTEMDSLLRPHTCPQCGKQFVWGSHLARHQQTHTGERPYSCLKCEKTFGRRHHLIRHQKTHLHDKTSRCSECGKNFRCNSHLASHQRVHAEGKSCKGQEVGESPGTRKRQRAPPVPKCHVCTECGKSFGRRHHLVRHWLTHTGEKPFQCPRCEKSFGRKHHLDRHLLTHQGQSPRNSWDRGTSVF.

The segment at 1–53 (MQAEDRSQFGSAAEMLSEQTAALGTGWESMNVQLDGAEPQVERGSQEERPWRT) is disordered. Polar residues predominate over residues 17–32 (SEQTAALGTGWESMNV). A compositionally biased stretch (basic and acidic residues) spans 40-51 (QVERGSQEERPW). The 73-residue stretch at 109 to 181 (VTIKDVSLCF…DPQDLEERDI (73 aa)) folds into the KRAB domain. Residues 171–265 (PDPQDLEERD…EMDSLLRPHT (95 aa)) are transactivation. Serine 191 is modified (phosphoserine). 3 consecutive C2H2-type zinc fingers follow at residues 264-286 (HTCP…QQTH), 292-314 (YSCL…QKTH), and 320-342 (SRCS…QRVH). Positions 345–367 (GKSCKGQEVGESPGTRKRQRAPP) are disordered. 2 C2H2-type zinc fingers span residues 372–394 (HVCT…WLTH) and 400–422 (FQCP…LLTH). The disordered stretch occupies residues 418–438 (HLLTHQGQSPRNSWDRGTSVF). The segment covering 422–438 (HQGQSPRNSWDRGTSVF) has biased composition (polar residues). Residue serine 426 is modified to Phosphoserine.

This sequence belongs to the krueppel C2H2-type zinc-finger protein family. As to expression, highly expressed in skeletal muscle, moderate expression in heart, liver, and pancreas, lower expression in placenta, no expression seen in brain, lung, and kidney.

Its subcellular location is the nucleus. In terms of biological role, transcriptional activator. Activates transcriptional activities of SRE and AP-1. The chain is Zinc finger protein 641 (ZNF641) from Homo sapiens (Human).